The chain runs to 143 residues: Small ribosomal subunit protein uS12 (143 aa).

Positions 1–15 (MGKCRGLRTARKLRD) are enriched in basic residues. Residues 1-27 (MGKCRGLRTARKLRDHRREQKWHDKQY) are disordered. A compositionally biased stretch (basic and acidic residues) spans 16 to 27 (HRREQKWHDKQY).

It belongs to the universal ribosomal protein uS12 family. In terms of assembly, component of the 40S small ribosomal subunit.

The protein resides in the cytoplasm. It localises to the cytosol. Its subcellular location is the rough endoplasmic reticulum. This Ictalurus punctatus (Channel catfish) protein is Small ribosomal subunit protein uS12 (rps23).